A 354-amino-acid chain; its full sequence is 5,10-methenyltetrahydromethanopterin hydrogenase (354 aa).

Belongs to the HMD family.

It catalyses the reaction 5,10-methenyl-5,6,7,8-tetrahydromethanopterin + H2 = 5,10-methylenetetrahydromethanopterin + H(+). It participates in one-carbon metabolism; methanogenesis from CO(2); 5,10-methylene-5,6,7,8-tetrahydromethanopterin from 5,10-methenyl-5,6,7,8-tetrahydromethanopterin (hydrogen route): step 1/1. Functionally, catalyzes the reversible reduction of methenyl-H(4)MPT(+) to methylene-H(4)MPT. The polypeptide is 5,10-methenyltetrahydromethanopterin hydrogenase (Methanococcus maripaludis (strain DSM 14266 / JCM 13030 / NBRC 101832 / S2 / LL)).